Here is a 245-residue protein sequence, read N- to C-terminus: Ubiquinone biosynthesis O-methyltransferase (245 aa).

Arginine 44, glycine 64, aspartate 85, and methionine 129 together coordinate S-adenosyl-L-methionine.

It belongs to the methyltransferase superfamily. UbiG/COQ3 family.

The catalysed reaction is a 3-demethylubiquinol + S-adenosyl-L-methionine = a ubiquinol + S-adenosyl-L-homocysteine + H(+). It carries out the reaction a 3-(all-trans-polyprenyl)benzene-1,2-diol + S-adenosyl-L-methionine = a 2-methoxy-6-(all-trans-polyprenyl)phenol + S-adenosyl-L-homocysteine + H(+). It functions in the pathway cofactor biosynthesis; ubiquinone biosynthesis. O-methyltransferase that catalyzes the 2 O-methylation steps in the ubiquinone biosynthetic pathway. The polypeptide is Ubiquinone biosynthesis O-methyltransferase (Proteus mirabilis (strain HI4320)).